Here is a 272-residue protein sequence, read N- to C-terminus: Hematopoietically-expressed homeobox protein hhex (272 aa).

The segment at residues 137–196 (RKGGQVRFSNDQTIELEKKFETQKYLSPPERKRLAKMLQLSERQVKTWFQNRRAKWRRLK) is a DNA-binding region (homeobox). Residues 222-272 (CLSAEQKSRESSLDDPTSSPTSQGNLDSEVSDDSDQEVDIEGDKGYYNCAH) form a disordered region. Positions 250-261 (EVSDDSDQEVDI) are enriched in acidic residues.

In terms of tissue distribution, first expressed in the dorsal endomesoderm of the gastrula stage embryo. The dorsal endomesoderm contributes to forming the embryonic liver, and expression continues in the liver throughout development. Also expressed in precursors of the developing thyroid gland, and beginning at the tailbud stage, expressed in the ventral region of the head. Also transiently expressed in the endothelial layer of developing vascular tissues of the embryo, beginning at the tailbud stages.

Its subcellular location is the nucleus. Its function is as follows. Recognizes the DNA sequence 5'-ATTAA-3'. Transcriptional repressor. Regulates the differentiation of both endothelial and blood cells. Probably plays a role in the proliferation of vascular endothelial cells during blood vessel development. Establishes anterior identity at two levels; acts early to enhance canonical wnt-signaling by repressing expression of tle4, and acts later to inhibit nodal-signaling by directly targeting nodal/nr1 and nodal2/nr2. May play a role in liver development. Induces heart development. The sequence is that of Hematopoietically-expressed homeobox protein hhex from Xenopus laevis (African clawed frog).